The primary structure comprises 315 residues: Ribosomal RNA small subunit methyltransferase H (315 aa).

Residues 35–37 (GGH), D55, F79, D101, and Q108 contribute to the S-adenosyl-L-methionine site.

This sequence belongs to the methyltransferase superfamily. RsmH family.

It localises to the cytoplasm. The catalysed reaction is cytidine(1402) in 16S rRNA + S-adenosyl-L-methionine = N(4)-methylcytidine(1402) in 16S rRNA + S-adenosyl-L-homocysteine + H(+). Specifically methylates the N4 position of cytidine in position 1402 (C1402) of 16S rRNA. The protein is Ribosomal RNA small subunit methyltransferase H of Photobacterium profundum (strain SS9).